A 655-amino-acid polypeptide reads, in one-letter code: Cyclomaltodextrin glucanotransferase (655 aa).

The N-terminal stretch at 1-30 is a signal peptide; it reads MKRNRFFNTSAAIAISIALNTFFCSMQTIA. Ca(2+)-binding residues include D55, N60, N61, G79, and D81. 123-124 provides a ligand contact to substrate; that stretch reads YW. Residue N164 coordinates Ca(2+). Substrate is bound by residues H165 and 217–220; that span reads NLFN. Residue D223 participates in Ca(2+) binding. R251 contributes to the substrate binding site. Catalysis depends on D253, which acts as the Nucleophile. Residue 256-257 participates in substrate binding; that stretch reads KH. Residue H257 coordinates Ca(2+). Catalysis depends on E287, which acts as the Proton donor. Residues H362, D436, and R440 each contribute to the substrate site. A CBM20 domain is found at 554 to 655; that stretch reads AENPTVQSIN…NDTQTTNGSF (102 aa). The interval 630–655 is disordered; sequence TANVEWQSGANNQFNSNDTQTTNGSF.

This sequence belongs to the glycosyl hydrolase 13 family. In terms of assembly, monomer. Ca(2+) is required as a cofactor.

It carries out the reaction Cyclizes part of a (1-&gt;4)-alpha-D-glucan chain by formation of a (1-&gt;4)-alpha-D-glucosidic bond.. The sequence is that of Cyclomaltodextrin glucanotransferase (cgt) from Klebsiella oxytoca.